Here is a 289-residue protein sequence, read N- to C-terminus: Ubiquinone biosynthesis O-methyltransferase (289 aa).

S-adenosyl-L-methionine is bound at residue Arg36. One can recognise an RPE1 insert domain in the interval 50 to 98 (RHLSKLTYREELVGNMQHSTAAYALVREDASSRLTHKLPLEAEFEKMSN). S-adenosyl-L-methionine is bound by residues Gly109, Asp130, and Leu172.

Belongs to the methyltransferase superfamily. UbiG/COQ3 family.

The enzyme catalyses a 3-demethylubiquinol + S-adenosyl-L-methionine = a ubiquinol + S-adenosyl-L-homocysteine + H(+). It carries out the reaction a 3-(all-trans-polyprenyl)benzene-1,2-diol + S-adenosyl-L-methionine = a 2-methoxy-6-(all-trans-polyprenyl)phenol + S-adenosyl-L-homocysteine + H(+). It functions in the pathway cofactor biosynthesis; ubiquinone biosynthesis. Functionally, O-methyltransferase that catalyzes the 2 O-methylation steps in the ubiquinone biosynthetic pathway. This is Ubiquinone biosynthesis O-methyltransferase from Rickettsia conorii (strain ATCC VR-613 / Malish 7).